A 945-amino-acid polypeptide reads, in one-letter code: Isoleucine--tRNA ligase (945 aa).

The span at 1 to 10 (MSNKKADSKP) shows a compositional bias: basic and acidic residues. Positions 1–21 (MSNKKADSKPQAKYPVNLLDT) are disordered. Residues 66–76 (PYANGDIHLGH) carry the 'HIGH' region motif. Glu-581 lines the L-isoleucyl-5'-AMP pocket. Residues 622–626 (KMSKS) carry the 'KMSKS' region motif. Residue Lys-625 coordinates ATP. Zn(2+) is bound by residues Cys-908, Cys-911, Cys-928, and Cys-931.

The protein belongs to the class-I aminoacyl-tRNA synthetase family. IleS type 1 subfamily. Monomer. Zn(2+) serves as cofactor.

The protein localises to the cytoplasm. It carries out the reaction tRNA(Ile) + L-isoleucine + ATP = L-isoleucyl-tRNA(Ile) + AMP + diphosphate. Its function is as follows. Catalyzes the attachment of isoleucine to tRNA(Ile). As IleRS can inadvertently accommodate and process structurally similar amino acids such as valine, to avoid such errors it has two additional distinct tRNA(Ile)-dependent editing activities. One activity is designated as 'pretransfer' editing and involves the hydrolysis of activated Val-AMP. The other activity is designated 'posttransfer' editing and involves deacylation of mischarged Val-tRNA(Ile). The sequence is that of Isoleucine--tRNA ligase from Burkholderia multivorans (strain ATCC 17616 / 249).